A 268-amino-acid chain; its full sequence is GTP cyclohydrolase FolE2 (268 aa).

The protein belongs to the GTP cyclohydrolase IV family.

The catalysed reaction is GTP + H2O = 7,8-dihydroneopterin 3'-triphosphate + formate + H(+). It functions in the pathway cofactor biosynthesis; 7,8-dihydroneopterin triphosphate biosynthesis; 7,8-dihydroneopterin triphosphate from GTP: step 1/1. Functionally, converts GTP to 7,8-dihydroneopterin triphosphate. In Methylococcus capsulatus (strain ATCC 33009 / NCIMB 11132 / Bath), this protein is GTP cyclohydrolase FolE2.